The following is a 1115-amino-acid chain: Neural cell adhesion molecule 1 (1115 aa).

Positions 1 to 19 (MLRTKDLIWTLFFLGTAVS) are cleaved as a signal peptide. 5 Ig-like C2-type domains span residues 20-111 (LQVD…ATVN), 116-205 (QKLM…KDIQ), 212-302 (PTVQ…ASIH), 309-402 (PKIT…MYLE), and 407-492 (PKLQ…ESLE). Over 20 to 711 (LQVDIVPSQG…NGSPTAGLST (692 aa)) the chain is Extracellular. 2 cysteine pairs are disulfide-bonded: Cys-41-Cys-96 and Cys-139-Cys-189. Heparin is bound by residues 152 to 156 (KHKGR) and 161 to 165 (KKDVR). N-linked (GlcNAc...) asparagine; partial glycosylation occurs at Asn-222. A disulfide bond links Cys-235 and Cys-288. Asn-316, Asn-348, Asn-424, Asn-450, and Asn-479 each carry an N-linked (GlcNAc...) asparagine glycan. Cys-330 and Cys-386 form a disulfide bridge. A disulfide bond links Cys-427 and Cys-480. 2 consecutive Fibronectin type-III domains span residues 500 to 599 (TPSS…TQPV) and 601 to 696 (EPSA…SAQP). Thr-706 is lipidated: GPI-anchor amidated serine. The chain crosses the membrane as a helical span at residues 712-729 (GAIVGILIVIFVLLLVVM). At 730-1115 (DITCYFLNKC…TQTKENESKA (386 aa)) the chain is on the cytoplasmic side. 3 disordered regions span residues 756 to 809 (GAKG…TEPE), 839 to 912 (FATA…SASN), and 924 to 1115 (VLSP…ESKA). A compositionally biased stretch (basic and acidic residues) spans 758-799 (KGKDMEEGKAAFSKDESKEPIVEVRTEEERTPNHDGGKHTEP). Residues Ser-770 and Ser-774 each carry the phosphoserine modification. 3 stretches are compositionally biased toward low complexity: residues 800–809 (NETTPLTEPE), 845–856 (SPTSETTTLTSS), and 876–896 (TPSK…KVAP). Ser-887 and Ser-890 each carry phosphoserine. Polar residues-rich tracts occupy residues 902–912 (DTPTSAPSASN) and 926–935 (SPSTPASAGE). Ser-926 carries the post-translational modification Phosphoserine. The residue at position 929 (Thr-929) is a Phosphothreonine. Low complexity-rich tracts occupy residues 936-974 (TSKA…PQAK) and 999-1012 (AATA…KAAT). Residues Ser-946 and Ser-958 each carry the phosphoserine modification. Thr-1001 bears the Phosphothreonine mark. Position 1005 is a phosphoserine (Ser-1005). Composition is skewed to basic and acidic residues over residues 1019 to 1037 (EDLK…DLAK) and 1074 to 1091 (KTEK…ESEA). Thr-1030 carries the phosphothreonine modification.

As to quaternary structure, interacts with MDK. Found in a complex with SLC39A6, SLC39A10 and with NCAM1; this complex controls NCAM1 phosphorylation and integration into focal adhesion complexes during epithelial-tomesenchymal transition. Interacts with synaptic plasticity regulator PANTS. Polysialylated by ST8SIA2 and ST8SIA4. Polysialylation modulates cell interactions by confering both attractive and repulsive properties that are highly regulated by ST8SIA2 and ST8SIA4. Polysialylation is formed on a-2,3-linked sialic acid of core glycans.

Its subcellular location is the cell membrane. Its function is as follows. This protein is a cell adhesion molecule involved in neuron-neuron adhesion, neurite fasciculation, outgrowth of neurites, etc. This Mus musculus (Mouse) protein is Neural cell adhesion molecule 1.